The chain runs to 119 residues: Non-structural protein 3b (119 aa).

The DRBM domain maps to 3 to 79 (YVSLLNQVWQ…AARKVCLRLQ (77 aa)).

As to quaternary structure, interacts with host RUNX1 isoform b.

The protein localises to the host nucleus. Its subcellular location is the host nucleolus. The protein resides in the host mitochondrion. Functionally, induces host cell G0/G1 arrest and apoptosis. This chain is Non-structural protein 3b, found in Pipistrellus abramus (Japanese pipistrelle).